A 196-amino-acid chain; its full sequence is Elongation factor Ts (196 aa).

An involved in Mg(2+) ion dislocation from EF-Tu region spans residues 80–83 (TDFV).

Belongs to the EF-Ts family.

It is found in the cytoplasm. Functionally, associates with the EF-Tu.GDP complex and induces the exchange of GDP to GTP. It remains bound to the aminoacyl-tRNA.EF-Tu.GTP complex up to the GTP hydrolysis stage on the ribosome. The sequence is that of Elongation factor Ts from Thermosipho melanesiensis (strain DSM 12029 / CIP 104789 / BI429).